Reading from the N-terminus, the 328-residue chain is tRNA uridine(34) hydroxylase (328 aa).

In terms of domain architecture, Rhodanese spans Leu-130–Glu-224. Cys-184 functions as the Cysteine persulfide intermediate in the catalytic mechanism.

The protein belongs to the TrhO family.

The catalysed reaction is uridine(34) in tRNA + AH2 + O2 = 5-hydroxyuridine(34) in tRNA + A + H2O. Catalyzes oxygen-dependent 5-hydroxyuridine (ho5U) modification at position 34 in tRNAs. The polypeptide is tRNA uridine(34) hydroxylase (Streptococcus pneumoniae (strain P1031)).